A 148-amino-acid polypeptide reads, in one-letter code: Transcriptional regulator MraZ (148 aa).

2 SpoVT-AbrB domains span residues 5–53 (ETAI…VEKE) and 82–125 (SALL…SEQA).

It belongs to the MraZ family. As to quaternary structure, forms oligomers.

It is found in the cytoplasm. It localises to the nucleoid. The sequence is that of Transcriptional regulator MraZ from Xylella fastidiosa (strain 9a5c).